The sequence spans 134 residues: Small ribosomal subunit protein uS11 (134 aa).

This sequence belongs to the universal ribosomal protein uS11 family. Part of the 30S ribosomal subunit. Interacts with proteins S7 and S18. Binds to IF-3.

Located on the platform of the 30S subunit, it bridges several disparate RNA helices of the 16S rRNA. Forms part of the Shine-Dalgarno cleft in the 70S ribosome. This chain is Small ribosomal subunit protein uS11, found in Leptothrix cholodnii (strain ATCC 51168 / LMG 8142 / SP-6) (Leptothrix discophora (strain SP-6)).